We begin with the raw amino-acid sequence, 229 residues long: Potassium/proton antiporter CemA (229 aa).

Transmembrane regions (helical) follow at residues 6 to 26 (AFIPFLYLASIVFLPWWISLS), 114 to 134 (ILCFVILSGYSILGNEELLII), and 189 to 209 (IISGLVSTFPVILDTIFKYWI).

Belongs to the CemA family.

The protein localises to the plastid. It is found in the chloroplast inner membrane. The enzyme catalyses K(+)(in) + H(+)(out) = K(+)(out) + H(+)(in). In terms of biological role, contributes to K(+)/H(+) antiport activity by supporting proton efflux to control proton extrusion and homeostasis in chloroplasts in a light-dependent manner to modulate photosynthesis. Prevents excessive induction of non-photochemical quenching (NPQ) under continuous-light conditions. Indirectly promotes efficient inorganic carbon uptake into chloroplasts. This chain is Potassium/proton antiporter CemA, found in Carica papaya (Papaya).